We begin with the raw amino-acid sequence, 145 residues long: LIRP (145 aa).

A signal peptide (or 22) is located at residues 1–19; it reads MWKLCLRLLAVLAVCLSTA. Propeptides lie at residues 20 to 33 and 117 to 122; these read TQAQ…SPKR and FRRRTR. Intrachain disulfides connect C44-C129, C56-C142, and C128-C133.

Belongs to the insulin family. As to quaternary structure, heterodimer of a B chain and an A chain linked by two disulfide bonds.

Its subcellular location is the secreted. The protein is LIRP of Locusta migratoria (Migratory locust).